Here is a 257-residue protein sequence, read N- to C-terminus: Imidazole glycerol phosphate synthase subunit HisF (257 aa).

Residues Asp-11 and Asp-130 contribute to the active site.

It belongs to the HisA/HisF family. In terms of assembly, heterodimer of HisH and HisF.

The protein resides in the cytoplasm. It carries out the reaction 5-[(5-phospho-1-deoxy-D-ribulos-1-ylimino)methylamino]-1-(5-phospho-beta-D-ribosyl)imidazole-4-carboxamide + L-glutamine = D-erythro-1-(imidazol-4-yl)glycerol 3-phosphate + 5-amino-1-(5-phospho-beta-D-ribosyl)imidazole-4-carboxamide + L-glutamate + H(+). It functions in the pathway amino-acid biosynthesis; L-histidine biosynthesis; L-histidine from 5-phospho-alpha-D-ribose 1-diphosphate: step 5/9. IGPS catalyzes the conversion of PRFAR and glutamine to IGP, AICAR and glutamate. The HisF subunit catalyzes the cyclization activity that produces IGP and AICAR from PRFAR using the ammonia provided by the HisH subunit. The chain is Imidazole glycerol phosphate synthase subunit HisF from Shewanella woodyi (strain ATCC 51908 / MS32).